A 660-amino-acid polypeptide reads, in one-letter code: Bifunctional polymyxin resistance protein ArnA (660 aa).

Residues 1-304 (MKAVIFAYHD…TLGLVAGARL (304 aa)) form a formyltransferase ArnAFT region. The active-site Proton donor; for formyltransferase activity is the His-104. Residues Arg-114 and 136-140 (VKRAD) contribute to the (6R)-10-formyltetrahydrofolate site. The tract at residues 314–660 (RRIRVLILGV…RSVDIAERAS (347 aa)) is dehydrogenase ArnADH. NAD(+) contacts are provided by residues Asp-347 and 368–369 (DI). UDP-alpha-D-glucuronate is bound by residues Ala-393, Tyr-398, and 432–433 (TS). Glu-434 serves as the catalytic Proton acceptor; for decarboxylase activity. UDP-alpha-D-glucuronate-binding positions include Arg-460, Asn-492, 526–535 (KLIDGGQQKR), and Tyr-613. Arg-619 serves as the catalytic Proton donor; for decarboxylase activity.

This sequence in the N-terminal section; belongs to the Fmt family. UDP-L-Ara4N formyltransferase subfamily. The protein in the C-terminal section; belongs to the NAD(P)-dependent epimerase/dehydratase family. UDP-glucuronic acid decarboxylase subfamily. Homohexamer, formed by a dimer of trimers.

The enzyme catalyses UDP-alpha-D-glucuronate + NAD(+) = UDP-beta-L-threo-pentopyranos-4-ulose + CO2 + NADH. It carries out the reaction UDP-4-amino-4-deoxy-beta-L-arabinose + (6R)-10-formyltetrahydrofolate = UDP-4-deoxy-4-formamido-beta-L-arabinose + (6S)-5,6,7,8-tetrahydrofolate + H(+). It functions in the pathway nucleotide-sugar biosynthesis; UDP-4-deoxy-4-formamido-beta-L-arabinose biosynthesis; UDP-4-deoxy-4-formamido-beta-L-arabinose from UDP-alpha-D-glucuronate: step 1/3. The protein operates within nucleotide-sugar biosynthesis; UDP-4-deoxy-4-formamido-beta-L-arabinose biosynthesis; UDP-4-deoxy-4-formamido-beta-L-arabinose from UDP-alpha-D-glucuronate: step 3/3. Its pathway is bacterial outer membrane biogenesis; lipopolysaccharide biosynthesis. Functionally, bifunctional enzyme that catalyzes the oxidative decarboxylation of UDP-glucuronic acid (UDP-GlcUA) to UDP-4-keto-arabinose (UDP-Ara4O) and the addition of a formyl group to UDP-4-amino-4-deoxy-L-arabinose (UDP-L-Ara4N) to form UDP-L-4-formamido-arabinose (UDP-L-Ara4FN). The modified arabinose is attached to lipid A and is required for resistance to polymyxin and cationic antimicrobial peptides. The protein is Bifunctional polymyxin resistance protein ArnA of Salmonella schwarzengrund (strain CVM19633).